The primary structure comprises 158 residues: 2-C-methyl-D-erythritol 2,4-cyclodiphosphate synthase (158 aa).

Residues aspartate 8 and histidine 10 each contribute to the a divalent metal cation site. 4-CDP-2-C-methyl-D-erythritol 2-phosphate is bound by residues 8–10 (DVH) and 34–35 (HS). Position 42 (histidine 42) interacts with a divalent metal cation. 4-CDP-2-C-methyl-D-erythritol 2-phosphate is bound by residues 56-58 (DIG), 61-65 (FPDTD), 100-106 (AQRPKMA), 132-135 (TTEE), phenylalanine 139, and arginine 142.

It belongs to the IspF family. In terms of assembly, homotrimer. It depends on a divalent metal cation as a cofactor.

The enzyme catalyses 4-CDP-2-C-methyl-D-erythritol 2-phosphate = 2-C-methyl-D-erythritol 2,4-cyclic diphosphate + CMP. Its pathway is isoprenoid biosynthesis; isopentenyl diphosphate biosynthesis via DXP pathway; isopentenyl diphosphate from 1-deoxy-D-xylulose 5-phosphate: step 4/6. Functionally, involved in the biosynthesis of isopentenyl diphosphate (IPP) and dimethylallyl diphosphate (DMAPP), two major building blocks of isoprenoid compounds. Catalyzes the conversion of 4-diphosphocytidyl-2-C-methyl-D-erythritol 2-phosphate (CDP-ME2P) to 2-C-methyl-D-erythritol 2,4-cyclodiphosphate (ME-CPP) with a corresponding release of cytidine 5-monophosphate (CMP). The sequence is that of 2-C-methyl-D-erythritol 2,4-cyclodiphosphate synthase from Pelobacter propionicus (strain DSM 2379 / NBRC 103807 / OttBd1).